A 260-amino-acid polypeptide reads, in one-letter code: Small ribosomal subunit protein uS2 (260 aa).

Belongs to the universal ribosomal protein uS2 family.

The sequence is that of Small ribosomal subunit protein uS2 from Staphylococcus carnosus (strain TM300).